We begin with the raw amino-acid sequence, 370 residues long: UDP-N-acetylglucosamine--N-acetylmuramyl-(pentapeptide) pyrophosphoryl-undecaprenol N-acetylglucosamine transferase (370 aa).

UDP-N-acetyl-alpha-D-glucosamine is bound by residues 10-12 (TGG), Asn126, Ser200, Ile255, and Gln300.

Belongs to the glycosyltransferase 28 family. MurG subfamily.

Its subcellular location is the cell membrane. The enzyme catalyses Mur2Ac(oyl-L-Ala-gamma-D-Glu-L-Lys-D-Ala-D-Ala)-di-trans,octa-cis-undecaprenyl diphosphate + UDP-N-acetyl-alpha-D-glucosamine = beta-D-GlcNAc-(1-&gt;4)-Mur2Ac(oyl-L-Ala-gamma-D-Glu-L-Lys-D-Ala-D-Ala)-di-trans,octa-cis-undecaprenyl diphosphate + UDP + H(+). The protein operates within cell wall biogenesis; peptidoglycan biosynthesis. Cell wall formation. Catalyzes the transfer of a GlcNAc subunit on undecaprenyl-pyrophosphoryl-MurNAc-pentapeptide (lipid intermediate I) to form undecaprenyl-pyrophosphoryl-MurNAc-(pentapeptide)GlcNAc (lipid intermediate II). The polypeptide is UDP-N-acetylglucosamine--N-acetylmuramyl-(pentapeptide) pyrophosphoryl-undecaprenol N-acetylglucosamine transferase (Lactobacillus gasseri (strain ATCC 33323 / DSM 20243 / BCRC 14619 / CIP 102991 / JCM 1131 / KCTC 3163 / NCIMB 11718 / NCTC 13722 / AM63)).